Consider the following 424-residue polypeptide: GTPase Obg (424 aa).

The 157-residue stretch at 2-158 (AKFIDQVKIM…YEANIVLKIL (157 aa)) folds into the Obg domain. The OBG-type G domain occupies 159–326 (SDVGLVGLPS…LKKIIWEFLE (168 aa)). GTP-binding positions include 165–172 (GLPSCGKS), 190–194 (FTTLV), 211–214 (DLPG), 280–283 (NKSD), and 307–309 (SAL). Mg(2+) contacts are provided by S172 and T192. Residues 344-422 (KEINYEPDFV…IYQHKFEWEE (79 aa)) form the OCT domain.

The protein belongs to the TRAFAC class OBG-HflX-like GTPase superfamily. OBG GTPase family. In terms of assembly, monomer. Requires Mg(2+) as cofactor.

It is found in the cytoplasm. An essential GTPase which binds GTP, GDP and possibly (p)ppGpp with moderate affinity, with high nucleotide exchange rates and a fairly low GTP hydrolysis rate. Plays a role in control of the cell cycle, stress response, ribosome biogenesis and in those bacteria that undergo differentiation, in morphogenesis control. This chain is GTPase Obg, found in Mycoplasmopsis synoviae (strain 53) (Mycoplasma synoviae).